Reading from the N-terminus, the 601-residue chain is Protein nubbin (601 aa).

Residues 1 to 25 (MVMSELRWHTASPEDNKNSLKRDLL) are compositionally biased toward basic and acidic residues. Disordered stretches follow at residues 1–32 (MVMS…PTSA), 49–94 (SRSP…AKRQ), 121–158 (KQEE…ATAS), 351–425 (PASS…ETTD), and 581–601 (INPS…YMMH). Residues 49 to 68 (SRSPSPLQSNASDCDDNNSS) show a composition bias toward low complexity. Residues 135 to 157 (NLTSDNSRHSTQSPSNSVKSATA) are compositionally biased toward polar residues. Residues 384–415 (TPSTPTSGTQMSQGTTTPQPKTVASAAAARAA) are compositionally biased toward low complexity. The 75-residue stretch at 421 to 495 (EETTDLEELE…LLQKWLDDAD (75 aa)) folds into the POU-specific domain. The segment at residues 523 to 582 (RRKKRTSIETTIRGALEKAFLANQKPTSEEITQLADRLSMEKEVVRVWFCNRRQKEKRIN) is a DNA-binding region (homeobox). The segment covering 591–601 (ADDDESSYMMH) has biased composition (acidic residues).

It belongs to the POU transcription factor family. Class-2 subfamily. As to expression, initial expression in cellular blastoderm stage, then in ectodermal stripes during germband extension. Broad expression in the neuroectoderm followed by limitation to discrete subsets of CNS cells, and expression in specific PNS neurons and support cells.

Its subcellular location is the nucleus. In terms of biological role, DNA-binding regulatory protein implicated in early development. Involved in neuronal cell fate decision. Repressed directly or indirectly by the BX-C homeotic proteins. The sequence is that of Protein nubbin (nub) from Drosophila melanogaster (Fruit fly).